Here is a 221-residue protein sequence, read N- to C-terminus: GTP-binding nuclear protein Ran-A1 (221 aa).

Positions 10–174 constitute a Small GTPase Ran-type domain; it reads DYPSFKLVIV…LYLARKLAGD (165 aa). Residue 21-28 coordinates GTP; the sequence is DGGTGKTT. The interval 40 to 48 is switch-I; the sequence is KKYEPTIGV. GTP contacts are provided by residues Gly71, 125–128, and 153–155; these read NKVD and SAK. The segment at 71 to 87 is switch-II; that stretch reads GQEKFGGLRDGYYIHGQ. Residues 199 to 208 are compositionally biased toward low complexity; the sequence is QHEAELAAAA. The interval 199–221 is disordered; sequence QHEAELAAAASQPLPDDDDETFD.

The protein belongs to the small GTPase superfamily. Ran family. As to quaternary structure, found in a nuclear export complex with RanGTP, exportin and pre-miRNA.

It is found in the nucleus. GTP-binding protein involved in nucleocytoplasmic transport. Required for the import of protein into the nucleus and also for RNA export. Involved in chromatin condensation and control of cell cycle. This is GTP-binding nuclear protein Ran-A1 (RAN-A1) from Nicotiana tabacum (Common tobacco).